We begin with the raw amino-acid sequence, 373 residues long: Securin (373 aa).

Basic and acidic residues predominate over residues 1-10 (MMPANEDKEN). Residues 1–27 (MMPANEDKENNIVYTGNESSGINFPQT) form a disordered region. The span at 12-26 (IVYTGNESSGINFPQ) shows a compositional bias: polar residues. The D-box motif lies at 85–88 (RLPL). The interval 177–278 (ADSGKNEESS…LPYVPEGYSP (102 aa)) is disordered. Phosphoserine is present on residues Ser-185, Ser-186, Ser-212, and Ser-213. The span at 185 to 194 (SSDDDEGNED) shows a compositional bias: acidic residues. Over residues 225-235 (LFNEQGGLQQL) the composition is skewed to low complexity. A compositionally biased stretch (basic and acidic residues) spans 240–256 (TKNEQKTKNDKSDKTDD). Residue Ser-277 is modified to Phosphoserine. Ser-292 carries the post-translational modification Phosphoserine; by CDC28.

The protein belongs to the securin family. As to quaternary structure, interacts with the caspase-like ESP1, and prevents its protease activity probably by covering its active site. Interacts with CDC20. Phosphorylated by CDC28. The phosphorylation may be important for ESP1 localization to the nucleus. In terms of processing, ubiquitinated by the anaphase promoting complex (APC) at the onset of anaphase, conducting to its degradation.

The protein localises to the cytoplasm. It localises to the nucleus. Its function is as follows. Regulatory protein, which plays a central role in chromosome stability. Probably acts by blocking the action of key proteins. During the mitosis, it blocks Separase/ESP1 function, preventing the proteolysis of the cohesin complex and the subsequent segregation of the chromosomes. At the onset of anaphase, it is ubiquitinated, conducting to its destruction and to the liberation of ESP1. The sequence is that of Securin (PDS1) from Saccharomyces cerevisiae (strain ATCC 204508 / S288c) (Baker's yeast).